The following is a 196-amino-acid chain: FMN-dependent NADH:quinone oxidoreductase (196 aa).

FMN contacts are provided by residues Ser-10 and 17-19; that span reads SYS.

The protein belongs to the azoreductase type 1 family. In terms of assembly, homodimer. Requires FMN as cofactor.

It carries out the reaction 2 a quinone + NADH + H(+) = 2 a 1,4-benzosemiquinone + NAD(+). The catalysed reaction is N,N-dimethyl-1,4-phenylenediamine + anthranilate + 2 NAD(+) = 2-(4-dimethylaminophenyl)diazenylbenzoate + 2 NADH + 2 H(+). Its function is as follows. Quinone reductase that provides resistance to thiol-specific stress caused by electrophilic quinones. Functionally, also exhibits azoreductase activity. Catalyzes the reductive cleavage of the azo bond in aromatic azo compounds to the corresponding amines. This Metamycoplasma arthritidis (strain 158L3-1) (Mycoplasma arthritidis) protein is FMN-dependent NADH:quinone oxidoreductase.